We begin with the raw amino-acid sequence, 210 residues long: FMN-dependent NADH:quinone oxidoreductase (210 aa).

Residues 17–19 (SCS) and 148–151 (SSGG) each bind FMN.

It belongs to the azoreductase type 1 family. Homodimer. The cofactor is FMN.

The catalysed reaction is 2 a quinone + NADH + H(+) = 2 a 1,4-benzosemiquinone + NAD(+). It catalyses the reaction N,N-dimethyl-1,4-phenylenediamine + anthranilate + 2 NAD(+) = 2-(4-dimethylaminophenyl)diazenylbenzoate + 2 NADH + 2 H(+). Quinone reductase that provides resistance to thiol-specific stress caused by electrophilic quinones. In terms of biological role, also exhibits azoreductase activity. Catalyzes the reductive cleavage of the azo bond in aromatic azo compounds to the corresponding amines. The polypeptide is FMN-dependent NADH:quinone oxidoreductase (Geotalea uraniireducens (strain Rf4) (Geobacter uraniireducens)).